Consider the following 100-residue polypeptide: Mini zinc finger protein 2 (100 aa).

The segment at 1–26 is disordered; that stretch reads MRKRQVVLRRASPEEPSRSSSTASSL. Residues 33–83 form a ZF-HD dimerization-type; degenerate zinc finger; the sequence is YGECQKNHAAAVGGYAVDGCREFMASRGEEGTVAALTCAACGCHRSFHRRE.

In terms of assembly, homo- and heterodimers. Interacts with ZHD1, ZHD3, ZHD5, ZHD8, ZHD10 and ZHD13. Mostly expressed in stems, flowers and siliques, and, to a lower extent, in inflorescence.

The protein localises to the cytoplasm. In terms of biological role, inhibits zinc finger homeodomain (ZHD) transcription factors by interacting with them to prevent both their nuclear localization and their DNA-binding properties. Involved in integrating signals from multiple hormones by regulating the expression of specific genes. This Arabidopsis thaliana (Mouse-ear cress) protein is Mini zinc finger protein 2 (MIF2).